A 358-amino-acid chain; its full sequence is Molybdenum import ATP-binding protein ModC 2 (358 aa).

Positions 1-234 (MPEQGIEAQL…PRLPLNHPDE (234 aa)) constitute an ABC transporter domain. Position 35-42 (35-42 (GRSGSGKT)) interacts with ATP. A Mop domain is found at 293-358 (NSSILNILRV…AQIKSVALME (66 aa)).

This sequence belongs to the ABC transporter superfamily. Molybdate importer (TC 3.A.1.8) family. As to quaternary structure, the complex is composed of two ATP-binding proteins (ModC), two transmembrane proteins (ModB) and a solute-binding protein (ModA).

The protein resides in the cell inner membrane. The catalysed reaction is molybdate(out) + ATP + H2O = molybdate(in) + ADP + phosphate + H(+). In terms of biological role, part of the ABC transporter complex ModABC involved in molybdenum import. Responsible for energy coupling to the transport system. This chain is Molybdenum import ATP-binding protein ModC 2, found in Azotobacter vinelandii.